A 748-amino-acid chain; its full sequence is ATP-dependent RNA helicase DRS1 (748 aa).

Disordered stretches follow at residues 1–72 (MAVK…PEFQ) and 111–211 (RKGG…EDTK). Residues 18-32 (DSEEDVPDLDASDDE) are compositionally biased toward acidic residues. Positions 38-52 (VKSSKTKNKSKKKAK) are enriched in basic residues. The segment covering 58–67 (HLDEDVHEDL) has biased composition (basic and acidic residues). 3 stretches are compositionally biased toward acidic residues: residues 124 to 153 (DAEE…DELA), 168 to 185 (ENEE…DEDD), and 202 to 211 (EDEDIEEDTK). Positions 233–261 (KTFNSLSLSRPVLKGLGSLGYTSPSPIQS) match the Q motif motif. Positions 264–439 (IPIALLGKDI…SLSLKKPVRI (176 aa)) constitute a Helicase ATP-binding domain. An ATP-binding site is contributed by 277-284 (AVTGSGKT). Positions 387–390 (DEAD) match the DEAD box motif. The Helicase C-terminal domain occupies 468 to 628 (LLYQLIRKLD…TQVEQVNSLI (161 aa)). The stretch at 632-667 (GDVVEEIIEEEKQEKEILRAEMELRKGENMLKHKEE) forms a coiled coil. The disordered stretch occupies residues 687 to 748 (KMLQVLAKNK…YGKKGKKGKK (62 aa)). Basic residues predominate over residues 694–705 (KNKKPINSKKRK). The span at 720–732 (TQKDRVEYQERQY) shows a compositional bias: basic and acidic residues.

Belongs to the DEAD box helicase family. DDX27/DRS1 subfamily. In terms of assembly, associates with pre-ribosomal particles.

It localises to the nucleus. Its subcellular location is the nucleolus. It carries out the reaction ATP + H2O = ADP + phosphate + H(+). Functionally, ATP-binding RNA helicase involved in ribosome assembly. The chain is ATP-dependent RNA helicase DRS1 (DRS1) from Kluyveromyces lactis (strain ATCC 8585 / CBS 2359 / DSM 70799 / NBRC 1267 / NRRL Y-1140 / WM37) (Yeast).